A 281-amino-acid chain; its full sequence is Transformer-2 protein homolog alpha (281 aa).

Positions 1–116 are disordered; it reads MSDVEENNFE…TGSRANPDPN (116 aa). S2 carries the post-translational modification N-acetylserine. Phosphoserine is present on residues S2 and S14. Residue T24 is modified to Phosphothreonine. The span at 51-82 shows a compositional bias: basic residues; sequence RSRSKSRSRSRRHSHRRYTRSRSHSHRRRSRS. Phosphoserine occurs at positions 80, 82, and 84. At T86 the chain carries Phosphothreonine. A compositionally biased stretch (basic residues) spans 90 to 108; sequence RRRRSRSHSPMSNRRRHTG. Phosphoserine occurs at positions 94 and 96. One can recognise an RRM domain in the interval 117 to 195; the sequence is TCLGVFGLSL…RRIRVDYSIT (79 aa). A Glycyl lysine isopeptide (Lys-Gly) (interchain with G-Cter in SUMO2) cross-link involves residue K196. Residues 196–223 are linker; that stretch reads KRAHTPTPGIYMGRPTHSGGGGGGGGGG. The interval 199 to 281 is disordered; sequence HTPTPGIYMG…RSRSYSPRRY (83 aa). Phosphothreonine is present on residues T200 and T202. Over residues 213–231 the composition is skewed to gly residues; the sequence is SGGGGGGGGGGGGGGGGGG. An Omega-N-methylarginine modification is found at R233. The span at 233 to 257 shows a compositional bias: basic and acidic residues; that stretch reads RRRDSYYDRGYDRGYDRYEDYDYRR. S237 carries the phosphoserine modification. A compositionally biased stretch (basic residues) spans 267-281; the sequence is YRSRSRSRSYSPRRY.

Belongs to the splicing factor SR family. Binds to A3 enhancer proteins SRp75, SRp55, SRp40 and SRp30. Interacts with ILDR1 (via C-terminus) and ILDR2. In terms of processing, phosphorylated in the RS domains. As to expression, expressed in inner ear.

Its subcellular location is the nucleus. Its function is as follows. Sequence-specific RNA-binding protein which participates in the control of pre-mRNA splicing. The protein is Transformer-2 protein homolog alpha of Mus musculus (Mouse).